The following is a 697-amino-acid chain: Elongation factor G (697 aa).

The tr-type G domain occupies 8 to 290 (ERYRNFGIMA…AVVDYLPSPL (283 aa)). GTP is bound by residues 17 to 24 (AHIDAGKT), 88 to 92 (DTPGH), and 142 to 145 (NKLD).

This sequence belongs to the TRAFAC class translation factor GTPase superfamily. Classic translation factor GTPase family. EF-G/EF-2 subfamily.

It localises to the cytoplasm. Its function is as follows. Catalyzes the GTP-dependent ribosomal translocation step during translation elongation. During this step, the ribosome changes from the pre-translocational (PRE) to the post-translocational (POST) state as the newly formed A-site-bound peptidyl-tRNA and P-site-bound deacylated tRNA move to the P and E sites, respectively. Catalyzes the coordinated movement of the two tRNA molecules, the mRNA and conformational changes in the ribosome. The sequence is that of Elongation factor G from Sphingopyxis alaskensis (strain DSM 13593 / LMG 18877 / RB2256) (Sphingomonas alaskensis).